A 374-amino-acid polypeptide reads, in one-letter code: Phosphate acyltransferase (374 aa).

The disordered stretch occupies residues A323–P374. Over residues V326–P335 the composition is skewed to basic and acidic residues.

This sequence belongs to the PlsX family. In terms of assembly, homodimer. Probably interacts with PlsY.

The protein localises to the cytoplasm. The catalysed reaction is a fatty acyl-[ACP] + phosphate = an acyl phosphate + holo-[ACP]. It participates in lipid metabolism; phospholipid metabolism. Functionally, catalyzes the reversible formation of acyl-phosphate (acyl-PO(4)) from acyl-[acyl-carrier-protein] (acyl-ACP). This enzyme utilizes acyl-ACP as fatty acyl donor, but not acyl-CoA. The polypeptide is Phosphate acyltransferase (Synechococcus sp. (strain JA-2-3B'a(2-13)) (Cyanobacteria bacterium Yellowstone B-Prime)).